The primary structure comprises 220 residues: Thiopurine S-methyltransferase (220 aa).

4 residues coordinate S-adenosyl-L-methionine: W10, L45, E66, and R123.

The protein belongs to the class I-like SAM-binding methyltransferase superfamily. TPMT family.

The protein resides in the cytoplasm. The enzyme catalyses S-adenosyl-L-methionine + a thiopurine = S-adenosyl-L-homocysteine + a thiopurine S-methylether.. The protein is Thiopurine S-methyltransferase of Pseudomonas syringae pv. tomato (strain ATCC BAA-871 / DC3000).